A 172-amino-acid polypeptide reads, in one-letter code: Peptide deformylase-like (172 aa).

The active site involves glutamate 134.

It belongs to the polypeptide deformylase family.

This is Peptide deformylase-like from Rhizobium meliloti (strain 1021) (Ensifer meliloti).